The primary structure comprises 312 residues: Aminoacyl tRNA synthase complex-interacting multifunctional protein 1 (312 aa).

Met1 bears the N-acetylmethionine mark. An N-acetylalanine modification is found at Ala2. A required for fibroblast proliferation region spans residues 6–46 (AVLKRLEQKGAEADQIIEYLKQQVSLLKEKAILQATLREEK). The tract at residues 54 to 194 (KLKKEIEELK…APRTVVSGLV (141 aa)) is interaction with HSP90B1. The tract at residues 101 to 114 (AVTTVSSGTKEQIK) is required for endothelial cell death. A disordered region spans residues 107–147 (SGTKEQIKGGTGDEKKAKEKIEKKGEKKEKKQQSIAGSADS). Residues 111–138 (EQIKGGTGDEKKAKEKIEKKGEKKEKKQ) are compositionally biased toward basic and acidic residues. The required for endothelial cell migration stretch occupies residues 114 to 192 (KGGTGDEKKA…EIAPRTVVSG (79 aa)). A Glycyl lysine isopeptide (Lys-Gly) (interchain with G-Cter in SUMO1) cross-link involves residue Lys137. Position 140 is a phosphoserine (Ser140). One can recognise a tRNA-binding domain in the interval 151-252 (DVSRLDLRIG…NGSVPGDRIT (102 aa)). Residue Lys269 is modified to N6-succinyllysine.

As to quaternary structure, homodimer. Part of the multisynthetase complex (MSC), a multisubunit complex that groups tRNA ligases for Arg (RARS1), Asp (DARS1), Gln (QARS1), Ile (IARS1), Leu (LARS1), Lys (KARS1), Met (MARS1) the bifunctional ligase for Glu and Pro (EPRS1) and the auxiliary subunits AIMP1/p43, AIMP2/p38 and EEF1E1/p18. Interacts (via N-terminus) with RARS1 (via N-terminus). Part of a complex composed of RARS1, QARS1 and AIMP1. Interacts (via C-terminus) with SMURF2. Interacts (via N-terminus) with HSP90B1/gp96 (via C-terminus). Interacts with PSMA7. Interacts with TARS3. Cleaved by caspase-7 in response to apoptosis to produce EMAP-II.

The protein resides in the nucleus. Its subcellular location is the cytoplasm. It localises to the cytosol. The protein localises to the secreted. It is found in the endoplasmic reticulum. The protein resides in the golgi apparatus. Functionally, non-catalytic component of the multisynthase complex. Stimulates the catalytic activity of cytoplasmic arginyl-tRNA synthase. Binds tRNA. Possesses inflammatory cytokine activity. Negatively regulates TGF-beta signaling through stabilization of SMURF2 by binding to SMURF2 and inhibiting its SMAD7-mediated degradation. Involved in glucose homeostasis through induction of glucagon secretion at low glucose levels. Promotes dermal fibroblast proliferation and wound repair. Regulates KDELR1-mediated retention of HSP90B1/gp96 in the endoplasmic reticulum. Plays a role in angiogenesis by inducing endothelial cell migration at low concentrations and endothelian cell apoptosis at high concentrations. Induces maturation of dendritic cells and monocyte cell adhesion. Modulates endothelial cell responses by degrading HIF-1A through interaction with PSMA7. The chain is Aminoacyl tRNA synthase complex-interacting multifunctional protein 1 (AIMP1) from Homo sapiens (Human).